An 850-amino-acid chain; its full sequence is Bifunctional levopimaradiene synthase, chloroplastic (850 aa).

Residues 1–52 constitute a chloroplast transit peptide; sequence MALPSSSLSSQIHTGATTQCIPHFHGSLNAGTSAGKRRSLYLRWGKGPSKIV. Lysine 250 is a substrate binding site. Residues aspartate 383 and aspartate 385 each contribute to the Mg(2+) site. Positions 383–386 match the DXDD motif motif; that stretch reads DIDD. Lysine 470 provides a ligand contact to substrate. 5 residues coordinate Mg(2+): aspartate 602, aspartate 606, asparagine 746, threonine 750, and glutamate 754. Residues 602 to 606 carry the DDXXD motif motif; sequence DDLYD.

This sequence belongs to the terpene synthase family. Tpsd subfamily. Mg(2+) is required as a cofactor. As to expression, expressed in young tissues such as flushing buds and green bark tissues. Lower levels in mature needles and bark.

The protein localises to the plastid. It is found in the chloroplast. The catalysed reaction is (2E,6E,10E)-geranylgeranyl diphosphate = (+)-copalyl diphosphate. The enzyme catalyses (+)-copalyl diphosphate = abieta-8(14),12-diene + diphosphate. It catalyses the reaction (+)-copalyl diphosphate = neoabietadiene + diphosphate. The protein operates within terpene metabolism; oleoresin biosynthesis. Involved in defensive oleoresin formation in conifers in response to insect attack or other injury. Involved in diterpene (C20) olefins biosynthesis. Bifunctional enzyme that catalyzes two sequential cyclizations of geranylgeranyl diphosphate (GGPP) to levopimaradiene. Levopimaradiene is the major products of the enzyme followed by abietadiene, neoabietadiene and palustradiene. No activity with geranyl diphosphate (GPP) or farnesyl diphosphate (FPP) as substrate. This is Bifunctional levopimaradiene synthase, chloroplastic (LPS) from Pinus taeda (Loblolly pine).